Here is a 414-residue protein sequence, read N- to C-terminus: Dual-specificity RNA methyltransferase RlmN (414 aa).

Polar residues predominate over residues 1–13 (MTSAVGISVPNTD). A disordered region spans residues 1 to 22 (MTSAVGISVPNTDAQSSQSASQ). Glu124 serves as the catalytic Proton acceptor. A Radical SAM core domain is found at 134-377 (TGSRKTLCIS…CTIRQTRGDD (244 aa)). Cys141 and Cys382 are disulfide-bonded. Positions 148, 152, and 155 each coordinate [4Fe-4S] cluster. S-adenosyl-L-methionine is bound by residues 204–205 (GE), Ser236, 258–260 (SLH), and Asn339. Catalysis depends on Cys382, which acts as the S-methylcysteine intermediate.

This sequence belongs to the radical SAM superfamily. RlmN family. Requires [4Fe-4S] cluster as cofactor.

It is found in the cytoplasm. It carries out the reaction adenosine(2503) in 23S rRNA + 2 reduced [2Fe-2S]-[ferredoxin] + 2 S-adenosyl-L-methionine = 2-methyladenosine(2503) in 23S rRNA + 5'-deoxyadenosine + L-methionine + 2 oxidized [2Fe-2S]-[ferredoxin] + S-adenosyl-L-homocysteine. The catalysed reaction is adenosine(37) in tRNA + 2 reduced [2Fe-2S]-[ferredoxin] + 2 S-adenosyl-L-methionine = 2-methyladenosine(37) in tRNA + 5'-deoxyadenosine + L-methionine + 2 oxidized [2Fe-2S]-[ferredoxin] + S-adenosyl-L-homocysteine. Specifically methylates position 2 of adenine 2503 in 23S rRNA and position 2 of adenine 37 in tRNAs. m2A2503 modification seems to play a crucial role in the proofreading step occurring at the peptidyl transferase center and thus would serve to optimize ribosomal fidelity. The sequence is that of Dual-specificity RNA methyltransferase RlmN from Acinetobacter baylyi (strain ATCC 33305 / BD413 / ADP1).